The following is a 116-amino-acid chain: Putative oxygen-evolving enhancer protein 1 (116 aa).

It belongs to the PsbO family.

The protein localises to the plastid. Its subcellular location is the chloroplast thylakoid membrane. Functionally, stabilizes the manganese cluster which is the primary site of water splitting. The chain is Putative oxygen-evolving enhancer protein 1 from Pinus strobus (Eastern white pine).